We begin with the raw amino-acid sequence, 379 residues long: MSTKGKVIKCKAAIAWEAGKPLSIEEVEVAPPKAHEVRVQIIAASVCRSDTYVINPAFKEGLLPVILGHECAGIVESVGPGVNNFKPGDKVIPLYVPHCRKCKFCQSPLTNFCTKFSEHKNPIIEQELMDDKTSRFTCKGKSIYHFLGISAFSQYTVVKDINLAKIDDDANLKRVCLIGCGFSTGYGAAINDAKVTPGSTCAVFGLGGVGLSAVIGCKTAGASRIIAVDINSDKFAKAKALGATDCLNPRELNKPVQDVIVEMTNGGVDFAIDCAGGSEVMKATVDCTTVGWGSCTFVGVNVNDKGLTISPVELILGRTLRGSSFGGWDVDTVPKLVSDYKNGKFNLEALVTHTLPFEKINEALDLLKQGKSIRTILIY.

Residues cysteine 47, histidine 69, cysteine 99, cysteine 102, cysteine 105, cysteine 113, and cysteine 176 each contribute to the Zn(2+) site. NAD(+) is bound by residues 205 to 210 (GLGGVG), aspartate 229, lysine 234, 298 to 300 (VGV), and arginine 374.

This sequence belongs to the zinc-containing alcohol dehydrogenase family. Class-II subfamily. In terms of assembly, homodimer. The cofactor is Zn(2+).

The protein localises to the cytoplasm. It carries out the reaction a primary alcohol + NAD(+) = an aldehyde + NADH + H(+). It catalyses the reaction a secondary alcohol + NAD(+) = a ketone + NADH + H(+). This Oryctolagus cuniculus (Rabbit) protein is Alcohol dehydrogenase class-2 isozyme 2 (ADH2-2).